Reading from the N-terminus, the 134-residue chain is Probable glycine cleavage system H protein (134 aa).

The region spanning 29–110 (TVLVGITDYA…PYEAWIAKIK (82 aa)) is the Lipoyl-binding domain. Lysine 70 carries the N6-lipoyllysine modification.

It belongs to the GcvH family. The glycine cleavage system is composed of four proteins: P, T, L and H. It depends on (R)-lipoate as a cofactor.

Its function is as follows. The glycine cleavage system catalyzes the degradation of glycine. The H protein shuttles the methylamine group of glycine from the P protein to the T protein. The protein is Probable glycine cleavage system H protein of Pyrococcus furiosus (strain ATCC 43587 / DSM 3638 / JCM 8422 / Vc1).